The primary structure comprises 752 residues: Probable GTP-binding protein OBGC1, chloroplastic (752 aa).

The transit peptide at 1 to 90 (MAPAVAVVAA…RFPTANPEPR (90 aa)) directs the protein to the chloroplast. Residues 19–121 (FSAEARRNTK…EEDEVELGLR (103 aa)) form a disordered region. Basic residues predominate over residues 26–36 (NTKGSRSKRGS). A compositionally biased stretch (acidic residues) spans 103–117 (GDDEEDEEEEEDEVE). The Obg domain maps to 294 to 452 (MRCFDTAKIY…MWIDLELKLV (159 aa)). Positions 453–621 (ADVGIVGAPN…VVLAAYKVLQ (169 aa)) constitute an OBG-type G domain. GTP-binding positions include 459–466 (GAPNAGKS), 484–488 (FTTLL), 506–509 (DLPG), 573–576 (NKMD), and 602–604 (SAM). Residues Ser466 and Thr486 each coordinate Mg(2+). Residues 649–728 (ERRAPMNEFE…VGEMEMVWTD (80 aa)) form the OCT domain. Residues 728–752 (DEPSKTRSSKTMNSKDDSVRWPEFG) form a disordered region. The span at 740–752 (NSKDDSVRWPEFG) shows a compositional bias: basic and acidic residues.

The protein belongs to the TRAFAC class OBG-HflX-like GTPase superfamily. OBG GTPase family. The cofactor is Mg(2+).

It is found in the plastid. Its subcellular location is the chloroplast. Functionally, probable GTP-binding protein that may play a role in chloroplast development. In Oryza sativa subsp. indica (Rice), this protein is Probable GTP-binding protein OBGC1, chloroplastic (OBGC1).